Reading from the N-terminus, the 251-residue chain is Aliphatic sulfonates import ATP-binding protein SsuB (251 aa).

Positions 3 to 231 (VSIDGVSKYF…PRSKTSESFQ (229 aa)) constitute an ABC transporter domain. 39 to 46 (GPSGCGKS) is an ATP binding site.

This sequence belongs to the ABC transporter superfamily. Aliphatic sulfonates importer (TC 3.A.1.17.2) family. In terms of assembly, the complex is composed of two ATP-binding proteins (SsuB), two transmembrane proteins (SsuC) and a solute-binding protein (SsuA).

The protein localises to the cell membrane. It carries out the reaction ATP + H2O + aliphatic sulfonate-[sulfonate-binding protein]Side 1 = ADP + phosphate + aliphatic sulfonateSide 2 + [sulfonate-binding protein]Side 1.. Its function is as follows. Part of the ABC transporter complex SsuABC involved in aliphatic sulfonates import. Responsible for energy coupling to the transport system. The chain is Aliphatic sulfonates import ATP-binding protein SsuB from Bacillus cereus (strain ATCC 10987 / NRS 248).